The sequence spans 264 residues: Small ribosomal subunit protein uS3 (264 aa).

One can recognise a KH type-2 domain in the interval 39–107; sequence VREFLKKKLK…PVHVNIEEIR (69 aa). The interval 211–264 is disordered; that stretch reads NDAPVVEEPQEERRKRPGRPEGRRREGEGRPGGQRRGAGAGGRRSGGADAKTGE. The span at 221–239 shows a compositional bias: basic and acidic residues; sequence EERRKRPGRPEGRRREGEG. A compositionally biased stretch (gly residues) spans 240–255; sequence RPGGQRRGAGAGGRRS.

It belongs to the universal ribosomal protein uS3 family. In terms of assembly, part of the 30S ribosomal subunit. Forms a tight complex with proteins S10 and S14.

Functionally, binds the lower part of the 30S subunit head. Binds mRNA in the 70S ribosome, positioning it for translation. This is Small ribosomal subunit protein uS3 from Ralstonia nicotianae (strain ATCC BAA-1114 / GMI1000) (Ralstonia solanacearum).